A 364-amino-acid polypeptide reads, in one-letter code: Phosphoserine aminotransferase (364 aa).

Arg-41 is a binding site for L-glutamate. Pyridoxal 5'-phosphate is bound by residues Ala-75–Ser-76, Trp-100, Thr-155, and Gln-198. At Lys-199 the chain carries N6-(pyridoxal phosphate)lysine. Asn-239–Thr-240 is a pyridoxal 5'-phosphate binding site.

The protein belongs to the class-V pyridoxal-phosphate-dependent aminotransferase family. SerC subfamily. Homodimer. It depends on pyridoxal 5'-phosphate as a cofactor.

The protein localises to the cytoplasm. The catalysed reaction is O-phospho-L-serine + 2-oxoglutarate = 3-phosphooxypyruvate + L-glutamate. It catalyses the reaction 4-(phosphooxy)-L-threonine + 2-oxoglutarate = (R)-3-hydroxy-2-oxo-4-phosphooxybutanoate + L-glutamate. Its pathway is amino-acid biosynthesis; L-serine biosynthesis; L-serine from 3-phospho-D-glycerate: step 2/3. Its function is as follows. Catalyzes the reversible conversion of 3-phosphohydroxypyruvate to phosphoserine and of 3-hydroxy-2-oxo-4-phosphonooxybutanoate to phosphohydroxythreonine. The sequence is that of Phosphoserine aminotransferase from Streptococcus thermophilus (strain ATCC BAA-250 / LMG 18311).